The sequence spans 330 residues: Probable UDP-3-O-acylglucosamine N-acyltransferase 1, mitochondrial (330 aa).

The transit peptide at 1–52 directs the protein to the mitochondrion; sequence MANSLRTLFSVSTHGVFLNKRSSYRVRKVFVGMPLRICSEIPRFVSVSCIRS. 160–162 contributes to the UDP-N-acetyl-alpha-D-glucosamine binding site; the sequence is FGF. The hexadecanoate site is built by D210 and Q214. H217 serves as the catalytic Proton acceptor. UDP-N-acetyl-alpha-D-glucosamine is bound by residues N218, S236, and H254.

Belongs to the transferase hexapeptide repeat family. LpxD subfamily. In terms of assembly, homotrimer.

Its subcellular location is the mitochondrion. The enzyme catalyses a UDP-3-O-[(3R)-3-hydroxyacyl]-alpha-D-glucosamine + a (3R)-hydroxyacyl-[ACP] = a UDP-2-N,3-O-bis[(3R)-3-hydroxyacyl]-alpha-D-glucosamine + holo-[ACP] + H(+). The protein operates within glycolipid biosynthesis; lipid IV(A) biosynthesis; lipid IV(A) from (3R)-3-hydroxytetradecanoyl-[acyl-carrier-protein] and UDP-N-acetyl-alpha-D-glucosamine: step 3/6. Its function is as follows. Involved in the biosynthesis of lipid A, a phosphorylated glycolipid that in bacteria anchors the lipopolysaccharide to the outer membrane of the cell. Lipid A-like molecules in plants may serve as structural components of the outer membranes of mitochondria and/or chloroplasts, or may be involved in signal transduction or plant defense responses. This Arabidopsis thaliana (Mouse-ear cress) protein is Probable UDP-3-O-acylglucosamine N-acyltransferase 1, mitochondrial (LPXD1).